The sequence spans 84 residues: Large ribosomal subunit protein bL27 (84 aa).

It belongs to the bacterial ribosomal protein bL27 family.

This chain is Large ribosomal subunit protein bL27, found in Campylobacter lari (strain RM2100 / D67 / ATCC BAA-1060).